We begin with the raw amino-acid sequence, 177 residues long: ATP synthase subunit delta (177 aa).

This sequence belongs to the ATPase delta chain family. In terms of assembly, F-type ATPases have 2 components, F(1) - the catalytic core - and F(0) - the membrane proton channel. F(1) has five subunits: alpha(3), beta(3), gamma(1), delta(1), epsilon(1). F(0) has three main subunits: a(1), b(2) and c(10-14). The alpha and beta chains form an alternating ring which encloses part of the gamma chain. F(1) is attached to F(0) by a central stalk formed by the gamma and epsilon chains, while a peripheral stalk is formed by the delta and b chains.

The protein localises to the cell inner membrane. Its function is as follows. F(1)F(0) ATP synthase produces ATP from ADP in the presence of a proton or sodium gradient. F-type ATPases consist of two structural domains, F(1) containing the extramembraneous catalytic core and F(0) containing the membrane proton channel, linked together by a central stalk and a peripheral stalk. During catalysis, ATP synthesis in the catalytic domain of F(1) is coupled via a rotary mechanism of the central stalk subunits to proton translocation. Functionally, this protein is part of the stalk that links CF(0) to CF(1). It either transmits conformational changes from CF(0) to CF(1) or is implicated in proton conduction. The protein is ATP synthase subunit delta of Shigella dysenteriae serotype 1 (strain Sd197).